The primary structure comprises 492 residues: Glutamyl-tRNA(Gln) amidotransferase subunit A (492 aa).

Residues Lys79 and Ser154 each act as charge relay system in the active site. Ser178 functions as the Acyl-ester intermediate in the catalytic mechanism.

This sequence belongs to the amidase family. GatA subfamily. As to quaternary structure, heterotrimer of A, B and C subunits.

It catalyses the reaction L-glutamyl-tRNA(Gln) + L-glutamine + ATP + H2O = L-glutaminyl-tRNA(Gln) + L-glutamate + ADP + phosphate + H(+). Its function is as follows. Allows the formation of correctly charged Gln-tRNA(Gln) through the transamidation of misacylated Glu-tRNA(Gln) in organisms which lack glutaminyl-tRNA synthetase. The reaction takes place in the presence of glutamine and ATP through an activated gamma-phospho-Glu-tRNA(Gln). This is Glutamyl-tRNA(Gln) amidotransferase subunit A from Acinetobacter baumannii (strain AB0057).